An 876-amino-acid chain; its full sequence is MSKSTAEIRQAFLDFFHSKGHQVVASSSLVPHNDPTLLFTNAGMNQFKDVFLGLDKRNYSRATTSQRCVRAGGKHNDLENVGYTARHHTFFEMLGNFSFGDYFKHDAIQFAWELLTSEKWFALPKERLWVTVYESDDEAYEIWEKEVGIPRERIIRIGDNKGAPYASDNFWQMGDTGPCGPCTEIFYDHGDHIWGGPPGSPEEDGDRYIEIWNIVFMQFNRQADGTMEPLPKPSVDTGMGLERIAAVLQHVNSNYDIDLFRTLIQAVAKVTGATDLSNKSLRVIADHIRSCAFLIADGVMPSNENRGYVLRRIIRRAVRHGNMLGAKETFFYKLVGPLIDVMGSAGEDLKRQQAQVEQVLKTEEEQFARTLERGLALLDEELAKLSGDTLDGETAFRLYDTYGFPVDLTADVCRERNIKVDEAGFEAAMEEQRRRAREASGFGADYNAMIRVDSASEFKGYDHLELNGKVTALFVDGKAVDAINAGQDAVVVLDQTPFYAESGGQVGDKGELKGANFSFVVEDTQKYGQAIGHIGKLAAGSLKVGDAVQADVDEARRARIRLNHSATHLMHAALRQVLGTHVSQKGSLVNDKVLRFDFSHNEAMKPEEIRAVEDLVNAQIRRNLPIETNIMDLEAAKAKGAMALFGEKYDERVRVLSMGDFSTELCGGTHASRTGDIGLFRIISESGTAAGVRRIEAVTGEGAIATVHADSDRLSEVAHLLKGDSNNLADKVRSVLERTRQLEKELQQLKEQAAAQESANLSSKAIDVNGVKLLVSELSGVEPKMLRTMVDDLKNQLGSTIIVLATVAEGKVSLIAGVSKDVTDRVKAGELIGMVAQQVGGKGGGRPDMAQAGGTDAAALPAALASVKGWVSAKLQ.

Lysine 74 bears the N6-acetyllysine mark. Zn(2+) contacts are provided by histidine 564, histidine 568, cysteine 666, and histidine 670.

It belongs to the class-II aminoacyl-tRNA synthetase family. In terms of assembly, homotetramer. Zn(2+) is required as a cofactor.

It is found in the cytoplasm. The enzyme catalyses tRNA(Ala) + L-alanine + ATP = L-alanyl-tRNA(Ala) + AMP + diphosphate. Catalyzes the attachment of alanine to tRNA(Ala) in a two-step reaction: alanine is first activated by ATP to form Ala-AMP and then transferred to the acceptor end of tRNA(Ala). Also edits incorrectly charged Ser-tRNA(Ala) and Gly-tRNA(Ala) via its editing domain. This Shigella dysenteriae serotype 1 (strain Sd197) protein is Alanine--tRNA ligase.